Here is a 256-residue protein sequence, read N- to C-terminus: 2-aminoethanethiol dioxygenase (256 aa).

Residues His100, His102, and His179 each contribute to the Fe cation site.

In terms of assembly, monomer. Fe cation serves as cofactor. As to expression, ubiquitous, with highest expression in brain, heart and skeletal muscle (at protein level).

It carries out the reaction cysteamine + O2 = hypotaurine + H(+). It catalyses the reaction N-terminal L-cysteinyl-[protein] + O2 = N-terminal S-hydroxy-S-oxy-L-cysteinyl-[protein] + H(+). In terms of biological role, plays a vital role in regulating thiol metabolism and preserving oxygen homeostasis by oxidizing the sulfur of cysteamine and N-terminal cysteine-containing proteins to their corresponding sulfinic acids using O2 as a cosubstrate. Catalyzes the oxidation of cysteamine (2-aminoethanethiol) to hypotaurine. Catalyzes the oxidation of the regulator of G-protein signaling 5 (RGS5). Also oxidizes proteins RGS4 and interleukin-32 (IL32). This chain is 2-aminoethanethiol dioxygenase (Ado), found in Mus musculus (Mouse).